The following is a 679-amino-acid chain: Stress-70 protein, mitochondrial (679 aa).

A mitochondrion-targeting transit peptide spans 1–46; the sequence is MISASRAVAARLVGAAASRGPTAARHQDGWNGLSHEAFRIVSRRDY. The interaction with NFS1 stretch occupies residues 1–432; the sequence is MISASRAVAA…IQGGVLAGDV (432 aa). ADP contacts are provided by T63 and N64. Positions 63–431 are nucleotide-binding domain (NBD); it reads TNSCVAVMEG…AIQGGVLAGD (369 aa). K76 carries the post-translational modification N6-acetyllysine. At T87 the chain carries Phosphothreonine. K135 and K138 each carry N6-acetyllysine; alternate. N6-succinyllysine; alternate occurs at positions 135 and 138. The residue at position 143 (K143) is an N6-acetyllysine. The residue at position 206 (K206) is an N6-acetyllysine; alternate. At K206 the chain carries N6-succinyllysine; alternate. K206 is subject to N6-malonyllysine; alternate. Residues K234 and K288 each carry the N6-acetyllysine modification. K300 is subject to N6-acetyllysine; alternate. At K300 the chain carries N6-succinyllysine; alternate. 3 residues coordinate ADP: E313, K316, and S320. K368 is modified (N6-succinyllysine). G388 and R391 together coordinate ADP. K394 bears the N6-succinyllysine mark. S408 bears the Phosphoserine mark. Positions 432 to 441 are interdomain linker; sequence VTDVLLLDVT. The interaction with FXN and ISCU stretch occupies residues 432 to 679; that stretch reads VTDVLLLDVT…QKEDQKEEKQ (248 aa). The segment at 442–679 is substrate-binding domain (SBD); the sequence is PLSLGIETLG…QKEDQKEEKQ (238 aa). R513 is subject to Omega-N-methylarginine. Residues K567 and K600 each carry the N6-acetyllysine; alternate modification. 2 positions are modified to N6-succinyllysine; alternate: K567 and K600. K610 carries the post-translational modification N6-succinyllysine. K612 is modified (N6-acetyllysine). At K646 the chain carries N6-acetyllysine; alternate. N6-succinyllysine; alternate is present on K646. A disordered region spans residues 656–679; the sequence is ASEREGSGSSGTGEQKEDQKEEKQ. Residues 669 to 679 are compositionally biased toward basic and acidic residues; the sequence is EQKEDQKEEKQ.

The protein belongs to the heat shock protein 70 family. Interacts strongly with the intermediate form of FXN and weakly with its mature form. Interacts with HSCB. Associates with the mitochondrial contact site and cristae organizing system (MICOS) complex, composed of at least MICOS10/MIC10, CHCHD3/MIC19, CHCHD6/MIC25, APOOL/MIC27, IMMT/MIC60, APOO/MIC23/MIC26 and QIL1/MIC13. This complex was also known under the names MINOS or MitOS complex. The MICOS complex associates with mitochondrial outer membrane proteins SAMM50, MTX1, MTX2 and DNAJC11, mitochondrial inner membrane protein TMEM11 and with HSPA9. Interacts with DNLZ, the interaction is required to prevent self-aggregation. Interacts with TESPA1. Interacts with PDPN. Interacts with NFU1, NFS1 and ISCU. Interacts with TP53; the interaction promotes TP53 degradation. Interacts (via SBD domain) with UBXN2A; the interaction with UBXN2A inhibits HSPA9/MOT-2 interaction with and degradation of TP53, thereby promotes TP53 translocation to the nucleus. Interacts with ITPR1 AND VDAC1; this interaction couples ITPR1 to VDAC1. Component of the TIM23 mitochondrial inner membrane pre-sequence translocase complex.

It is found in the mitochondrion. The protein resides in the nucleus. It localises to the nucleolus. Its subcellular location is the cytoplasm. The protein localises to the mitochondrion matrix. It carries out the reaction ATP + H2O = ADP + phosphate + H(+). The chaperone activity is regulated by ATP-induced allosteric coupling of the nucleotide-binding (NBD) and substrate-binding (SBD) domains. ATP binding in the nucleotide-binding pocket (NBP) leads to a conformational change in the NBD, which is transferred through the interdomain linker (IDL) to the substrate-binding domain (SBD). This elicits a reduced substrate affinity and a faster substrate exchange rate. Upon hydrolysis of ATP to ADP, the protein undergoes a conformational change that increases its affinity for substrate proteins. It cycles through repeated phases of ATP hydrolysis and nucleotide exchange, facilitating repeated cycles of substrate binding and release. Functions in collaboration with co-chaperones. Functions with the co-chaperone, DNLZ, to maintain solubility and regulate ATP hydrolysis. Nucleotide exchange factors, GRPEL1 and GRPEL2, accelerate nucleotide exchange. Mitochondrial chaperone that plays a key role in mitochondrial protein import, folding, and assembly. Plays an essential role in the protein quality control system, the correct folding of proteins, the re-folding of misfolded proteins, and the targeting of proteins for subsequent degradation. These processes are achieved through cycles of ATP binding, ATP hydrolysis, and ADP release, mediated by co-chaperones. In mitochondria, it associates with the TIM (translocase of the inner membrane) protein complex to assist in the import and folding of mitochondrial proteins. Plays an important role in mitochondrial iron-sulfur cluster (ISC) biogenesis, interacts with and stabilizes ISC cluster assembly proteins FXN, NFU1, NFS1 and ISCU. Regulates erythropoiesis via stabilization of ISC assembly. Regulates mitochondrial calcium-dependent apoptosis by coupling two calcium channels, ITPR1 and VDAC1, at the mitochondria-associated endoplasmic reticulum (ER) membrane to facilitate calcium transport from the ER lumen to the mitochondria intermembrane space, providing calcium for the downstream calcium channel MCU, which releases it into the mitochondrial matrix. Although primarily located in the mitochondria, it is also found in other cellular compartments. In the cytosol, it associates with proteins involved in signaling, apoptosis, or senescence. It may play a role in cell cycle regulation via its interaction with and promotion of degradation of TP53. May play a role in the control of cell proliferation and cellular aging. Protects against reactive oxygen species (ROS). Extracellular HSPA9 plays a cytoprotective role by preventing cell lysis following immune attack by the membrane attack complex by disrupting formation of the complex. The chain is Stress-70 protein, mitochondrial from Pongo abelii (Sumatran orangutan).